The following is a 134-amino-acid chain: Auxin-responsive protein SAUR40 (134 aa).

The protein belongs to the ARG7 family. As to quaternary structure, interacts with and inhibits PP2C-D subfamily of type 2C phosphatases such as PP2C67/PP2C-D1.

The protein resides in the cytoplasm. In terms of biological role, provide a mechanistic link between auxin and plasma membrane H(+)-ATPases (PM H(+)-ATPases, e.g. AHA1 and AHA2), and triggers PM H(+)-ATPases activity by promoting phosphorylation of their C-terminal autoinhibitory domain as a result of PP2C-D subfamily of type 2C phosphatases inhibition, thus leading to the acidification of the apoplast and the facilitation of solutes and water uptake to drive cell expansion. Plays a role in the regulation of cell expansion, root meristem patterning and auxin transport. The sequence is that of Auxin-responsive protein SAUR40 from Arabidopsis thaliana (Mouse-ear cress).